We begin with the raw amino-acid sequence, 122 residues long: Large ribosomal subunit protein uL14 (122 aa).

This sequence belongs to the universal ribosomal protein uL14 family. In terms of assembly, part of the 50S ribosomal subunit. Forms a cluster with proteins L3 and L19. In the 70S ribosome, L14 and L19 interact and together make contacts with the 16S rRNA in bridges B5 and B8.

Its function is as follows. Binds to 23S rRNA. Forms part of two intersubunit bridges in the 70S ribosome. The protein is Large ribosomal subunit protein uL14 of Mesorhizobium japonicum (strain LMG 29417 / CECT 9101 / MAFF 303099) (Mesorhizobium loti (strain MAFF 303099)).